An 838-amino-acid chain; its full sequence is pre-rRNA 2'-O-ribose RNA methyltransferase FTSJ3 (838 aa).

5 residues coordinate S-adenosyl-L-methionine: G56, W58, D76, D92, and D117. K157 serves as the catalytic Proton acceptor. The tract at residues 332–367 is disordered; the sequence is ISLSSEEEEEGDEEEAVAETKQAPEEEEEREEEQLN. A phosphoserine mark is found at S333, S335, and S336. Positions 336–348 are enriched in acidic residues; it reads SEEEEEGDEEEAV. R390 is modified (citrulline). A disordered region spans residues 453–482; that stretch reads IYVSDAEDDDDTSLESDLDPEELAGVRTHS. The segment covering 457–474 has biased composition (acidic residues); sequence DAEDDDDTSLESDLDPEE. Phosphoserine is present on residues S532 and S545. Residues 537 to 639 are disordered; the sequence is DADEALEISQ…GRGSKADEDG (103 aa). K571 participates in a covalent cross-link: Glycyl lysine isopeptide (Lys-Gly) (interchain with G-Cter in SUMO2). S576 bears the Phosphoserine mark. Glycyl lysine isopeptide (Lys-Gly) (interchain with G-Cter in SUMO2) cross-links involve residues K634 and K650. Residue S667 is modified to Phosphoserine. Residue K669 forms a Glycyl lysine isopeptide (Lys-Gly) (interchain with G-Cter in SUMO2) linkage. The residue at position 679 (S679) is a Phosphoserine. K701 participates in a covalent cross-link: Glycyl lysine isopeptide (Lys-Gly) (interchain with G-Cter in SUMO2). A coiled-coil region spans residues 730–768; sequence IKKVAEAKARKKRRVLKKLEQTKKKAEAVVNTVDISERE. At R774 the chain carries Citrulline. The span at 802-812 shows a compositional bias: basic residues; sequence VRRPAGVKGHF. The disordered stretch occupies residues 802–838; the sequence is VRRPAGVKGHFKVVDSRMKKDQRAQQRKEQKKKHKRK. Residues 813–829 are compositionally biased toward basic and acidic residues; sequence KVVDSRMKKDQRAQQRK.

It belongs to the class I-like SAM-binding methyltransferase superfamily. RNA methyltransferase RlmE family. SPB1 subfamily. In terms of assembly, interacts with NIP7. Post-translationally, citrullinated by PADI4.

The protein localises to the nucleus. It localises to the nucleolus. It carries out the reaction a ribonucleotide in rRNA + S-adenosyl-L-methionine = a 2'-O-methylribonucleotide in rRNA + S-adenosyl-L-homocysteine + H(+). RNA 2'-O-methyltransferase involved in the processing of the 34S pre-rRNA to 18S rRNA and in 40S ribosomal subunit formation. The chain is pre-rRNA 2'-O-ribose RNA methyltransferase FTSJ3 (Ftsj3) from Mus musculus (Mouse).